The primary structure comprises 242 residues: 1-(5-phosphoribosyl)-5-[(5-phosphoribosylamino)methylideneamino] imidazole-4-carboxamide isomerase (242 aa).

Aspartate 7 (proton acceptor) is an active-site residue. Catalysis depends on aspartate 129, which acts as the Proton donor.

This sequence belongs to the HisA/HisF family.

It localises to the cytoplasm. It catalyses the reaction 1-(5-phospho-beta-D-ribosyl)-5-[(5-phospho-beta-D-ribosylamino)methylideneamino]imidazole-4-carboxamide = 5-[(5-phospho-1-deoxy-D-ribulos-1-ylimino)methylamino]-1-(5-phospho-beta-D-ribosyl)imidazole-4-carboxamide. It participates in amino-acid biosynthesis; L-histidine biosynthesis; L-histidine from 5-phospho-alpha-D-ribose 1-diphosphate: step 4/9. The polypeptide is 1-(5-phosphoribosyl)-5-[(5-phosphoribosylamino)methylideneamino] imidazole-4-carboxamide isomerase (Pseudoalteromonas translucida (strain TAC 125)).